Here is a 109-residue protein sequence, read N- to C-terminus: Spermidine export protein MdtI (109 aa).

The Periplasmic portion of the chain corresponds to 1–5 (MAQFE). The helical transmembrane segment at 6–26 (WVHAAWLALAIVLEIIANVFL) threads the bilayer. At 27 to 35 (KFSDGFRRK) the chain is on the cytoplasmic side. The helical transmembrane segment at 36–56 (IFGLLSLAAVLAAFSALSQAV) threads the bilayer. Residues 57-63 (KGIDLSV) are Periplasmic-facing. The chain crosses the membrane as a helical span at residues 64–84 (AYALWGGFGIAATLAAGWILF). Topologically, residues 85–87 (GQR) are cytoplasmic. The chain crosses the membrane as a helical span at residues 88-108 (LNRKGWIGLVLLLAGMIMVKL). Position 109 (Ala109) is a topological domain, periplasmic.

It belongs to the drug/metabolite transporter (DMT) superfamily. Small multidrug resistance (SMR) (TC 2.A.7.1) family. MdtI subfamily. Forms a complex with MdtJ.

Its subcellular location is the cell inner membrane. Its function is as follows. Catalyzes the excretion of spermidine. The protein is Spermidine export protein MdtI (mdtI) of Escherichia coli O6:H1 (strain CFT073 / ATCC 700928 / UPEC).